A 211-amino-acid chain; its full sequence is Imidazole glycerol phosphate synthase subunit HisH (211 aa).

Residues T4 to I211 enclose the Glutamine amidotransferase type-1 domain. The active-site Nucleophile is C82. Active-site residues include H192 and E194.

In terms of assembly, heterodimer of HisH and HisF.

Its subcellular location is the cytoplasm. It carries out the reaction 5-[(5-phospho-1-deoxy-D-ribulos-1-ylimino)methylamino]-1-(5-phospho-beta-D-ribosyl)imidazole-4-carboxamide + L-glutamine = D-erythro-1-(imidazol-4-yl)glycerol 3-phosphate + 5-amino-1-(5-phospho-beta-D-ribosyl)imidazole-4-carboxamide + L-glutamate + H(+). The enzyme catalyses L-glutamine + H2O = L-glutamate + NH4(+). Its pathway is amino-acid biosynthesis; L-histidine biosynthesis; L-histidine from 5-phospho-alpha-D-ribose 1-diphosphate: step 5/9. Its function is as follows. IGPS catalyzes the conversion of PRFAR and glutamine to IGP, AICAR and glutamate. The HisH subunit catalyzes the hydrolysis of glutamine to glutamate and ammonia as part of the synthesis of IGP and AICAR. The resulting ammonia molecule is channeled to the active site of HisF. The sequence is that of Imidazole glycerol phosphate synthase subunit HisH from Corynebacterium efficiens (strain DSM 44549 / YS-314 / AJ 12310 / JCM 11189 / NBRC 100395).